The primary structure comprises 495 residues: Pleckstrin homology domain-containing family O member 2 (495 aa).

Residues 18–120 (TADKAGWIKK…WIKALNEGIN (103 aa)) enclose the PH domain. Phosphoserine occurs at positions 165 and 168. The segment at 171 to 411 (LSRLDLDVPD…ESPQHPRLPK (241 aa)) is disordered. Positions 198 to 213 (QEPPRALMPPVKPSPG) are enriched in pro residues. T233 is modified (phosphothreonine). A compositionally biased stretch (polar residues) spans 235–244 (DSASSGANPE). S236, S238, S239, S274, and S292 each carry phosphoserine. T296 carries the phosphothreonine modification. The span at 324–335 (SGVDASGSSQSS) shows a compositional bias: low complexity. Positions 336–350 (EAPETTSPEPTQVSV) are enriched in polar residues. Residue S395 is modified to Phosphoserine. Residues 399–411 (LLRESPQHPRLPK) are compositionally biased toward basic and acidic residues. Residues 444 to 469 (CAESLLSQAVEQLRQATQVLQEMRDL) are a coiled coil.

In Mus musculus (Mouse), this protein is Pleckstrin homology domain-containing family O member 2 (Plekho2).